The sequence spans 182 residues: Peptide methionine sulfoxide reductase MsrA (182 aa).

Residue Cys-13 is part of the active site.

It belongs to the MsrA Met sulfoxide reductase family.

It carries out the reaction L-methionyl-[protein] + [thioredoxin]-disulfide + H2O = L-methionyl-(S)-S-oxide-[protein] + [thioredoxin]-dithiol. It catalyses the reaction [thioredoxin]-disulfide + L-methionine + H2O = L-methionine (S)-S-oxide + [thioredoxin]-dithiol. Its function is as follows. Has an important function as a repair enzyme for proteins that have been inactivated by oxidation. Catalyzes the reversible oxidation-reduction of methionine sulfoxide in proteins to methionine. In Mycobacterium bovis (strain ATCC BAA-935 / AF2122/97), this protein is Peptide methionine sulfoxide reductase MsrA.